Here is a 320-residue protein sequence, read N- to C-terminus: TATA box-binding protein-like 2 (320 aa).

The protein belongs to the TBP family. As to expression, expression is restricted to the gonads, and is higher in the ovary than the testis.

Its subcellular location is the nucleus. Functionally, TATA box-binding transcription factor. Members of the TBP family are differentially required to regulate transcription and development during early embryogenesis. Required for gastrulation. Regulates a large subset of genes that are ventrally expressed. Binds to a subset of promoters. The polypeptide is TATA box-binding protein-like 2 (Xenopus laevis (African clawed frog)).